We begin with the raw amino-acid sequence, 71 residues long: uncharacterized protein (71 aa).

The first 23 residues, Met-1 to Leu-23, serve as a signal peptide directing secretion. Residues Asn-20, Asn-28, Asn-44, and Asn-50 are each glycosylated (N-linked (GlcNAc...) asparagine).

It localises to the secreted. This is an uncharacterized protein from Dictyostelium discoideum (Social amoeba).